The sequence spans 1231 residues: MSFFNFRKIFKLGSEKKKKQYEHVKRDLNPEEFWETIGELGDGAFGKVYKAQNKETNVLAAAKVIDTKSEEELEDYMVEIDILASCDHPNIVKLLDAFYYENNLWILIEFCAGGAVDAVMLELERPLTESQIQVVCKQTLEALNYLHDNKIIHRDLKAGNILFTLDGDIKLADFGVSAKNTRTIQRRDSFIGTPYWMAPEVVMCETSKDRPYDYKADVWSLGITLIEMAEIEPPHHELNPMRVLLKIAKSEPPTLAQPSRWSSNFKDFLKKCLEKNVDARWTTSQLLQHPFVTIDSNKPIRELIAEAKAEVTEEVEDGKEEDDDEEIENSLPIPTNKRASSDLSIASSEEDKLSQNACILESVSEKTEHNASGDKFSTKVLNEKPCPGEPENAVELVGGAVAVLPDRATELPESGREEKRPKLDRLPDTEDQEMADINSVSEGEEDHAVTSETNIEHNLKPEKERDQEKQPVLENKLVKSEDTTIQTVDLVSQETGEKEVDIHILDSEVVHAVEDTHEKLRKDDTTQKDVISDTSSVGERDEEIGAVPKTAESSAEGAQGDGGKETDEGAQILISKATEGPKASGTEEAPPVTEITETNDTDQKLVENTHEKQLPISSETTLDTSEGLGASEGREVTESGSTEEVEVEGAVSETDEEDVQSETRGAPMAVTQMDTEKNETPHEAPAQVEVQVPVPPQPSEPPPAPIPSININSEAAENKGEMGASLNTETILLPESESQKENDTDSGTGSTADNSSIDLNLSISSFLSKTKDNGSISLQETRRQKKTLKKTRKFIVDGVEVSVTTSKIVTDSDSKTEELRFLRRQELRELRFLQKEEQRAQQQLNGKLQQQREQIFRRFEQEMMSKKRQYDQEIENLEKQQKQTIERLEQEHTNRLRDEAKRIKGEQEKELSKFQNILKNRKKEVLNEVEKAPKDLRKELMKRRKEELAQSQHVQEQDFVQKQQQELDGSLKKIIQQQKAELANIERECLNNKQQLMRAREAAIWELEERHLQEKHQLLKQQLKDQYFMQRHQLLKRHEKETEQMQRYNQRLIEELKNRQTQERARLPKIQRSEAKTRMAMFKKSLRINSTATPDQDRDKIKQFSAQEEKRQKNERMAQHQKHENQMRDLQLQCEANVRELHQLQNEKCHLLVEHETQKLKELDEEHSQELKEWREKLRPRKKTLEEEFARKLQEQEVFFKMTGESECLNPSTQSRISKFYPIPSLHSTGS.

Residue S14 is modified to Phosphoserine. In terms of domain architecture, Protein kinase spans W34 to V292. Residues L40–V48 and K63 contribute to the ATP site. The active-site Proton acceptor is D155. T183 carries the post-translational modification Phosphothreonine. Residue S189 is modified to Phosphoserine. The segment at A309–D351 is disordered. Positions T312 to E328 are enriched in acidic residues. A phosphoserine mark is found at S330, S340, S341, S344, S347, S348, S354, and S372. Residues K337–S347 show a composition bias toward polar residues. The segment at P405 to V478 is disordered. Composition is skewed to basic and acidic residues over residues R407–D428 and D446–V478. S507 bears the Phosphoserine mark. Basic and acidic residues predominate over residues T516–I531. The disordered stretch occupies residues T516–I757. S536 and S554 each carry phosphoserine. Residues T601–Q613 are compositionally biased toward basic and acidic residues. The span at P615–T624 shows a compositional bias: polar residues. Phosphoserine is present on residues S641 and S661. Residues S641–Q660 are compositionally biased toward acidic residues. Residues E683–V692 show a composition bias toward low complexity. Over residues P693 to I706 the composition is skewed to pro residues. S775 carries the phosphoserine modification. A Phosphothreonine modification is found at T810. Phosphoserine is present on S814. Positions L822–A1065 form a coiled coil. Positions D871–E906 constitute a UVR domain. The residue at position 1093 (T1093) is a Phosphothreonine. A coiled-coil region spans residues S1105–R1179.

It belongs to the protein kinase superfamily. STE Ser/Thr protein kinase family. STE20 subfamily. Post-translationally, proteolytically cleaved by caspase-3. In terms of processing, autophosphorylated. As to expression, ubiquitously expressed.

Its subcellular location is the cytoplasm. It catalyses the reaction L-seryl-[protein] + ATP = O-phospho-L-seryl-[protein] + ADP + H(+). The catalysed reaction is L-threonyl-[protein] + ATP = O-phospho-L-threonyl-[protein] + ADP + H(+). Mediates apoptosis and actin stress fiber dissolution. The sequence is that of STE20-like serine/threonine-protein kinase (SLK) from Cavia porcellus (Guinea pig).